Reading from the N-terminus, the 557-residue chain is Calcium-dependent protein kinase 4 (557 aa).

Residues 1–72 (MGNTCRGSIG…LVSPRKASMN (72 aa)) are disordered. Gly2 carries N-myristoyl glycine lipidation. The segment covering 15 to 27 (QGYTQPEDSSCST) has biased composition (polar residues). A compositionally biased stretch (low complexity) spans 28–48 (NHNPSSGNSYSSSDNFSPTSN). Residues 94-352 (YTLGRKLGQG…AHEVLCHPWI (259 aa)) enclose the Protein kinase domain. ATP is bound by residues 100–108 (LGQGQFGTT) and Lys123. Asp218 (proton acceptor) is an active-site residue. Positions 358-388 (APDRALDPAVLSRLKQFSAMNKLKKMALRVI) are autoinhibitory domain. 4 EF-hand domains span residues 395–430 (EEIA…YGST), 431–466 (LKDT…LNKL), 467–502 (EREE…HNMT), and 506–536 (FEDI…GNPC). Residues Asp408, Asp410, Ser412, Glu419, Asp444, Asp446, Ser448, Thr450, Glu455, Asp480, Asp482, Ser484, Tyr486, Glu491, Asp514, Asp516, Asp518, Arg520, and Glu525 each contribute to the Ca(2+) site.

Belongs to the protein kinase superfamily. Ser/Thr protein kinase family. CDPK subfamily.

Its subcellular location is the membrane. It catalyses the reaction L-seryl-[protein] + ATP = O-phospho-L-seryl-[protein] + ADP + H(+). The enzyme catalyses L-threonyl-[protein] + ATP = O-phospho-L-threonyl-[protein] + ADP + H(+). With respect to regulation, activated by calcium. Autophosphorylation may play an important role in the regulation of the kinase activity. Its function is as follows. Regulates the production of reactive oxygen species (ROS) by NADPH oxidase. The polypeptide is Calcium-dependent protein kinase 4 (CPK4) (Solanum tuberosum (Potato)).